The primary structure comprises 513 residues: ATP synthase subunit alpha (513 aa).

169–176 lines the ATP pocket; the sequence is GDRQTGKT.

The protein belongs to the ATPase alpha/beta chains family. In terms of assembly, F-type ATPases have 2 components, CF(1) - the catalytic core - and CF(0) - the membrane proton channel. CF(1) has five subunits: alpha(3), beta(3), gamma(1), delta(1), epsilon(1). CF(0) has three main subunits: a(1), b(2) and c(9-12). The alpha and beta chains form an alternating ring which encloses part of the gamma chain. CF(1) is attached to CF(0) by a central stalk formed by the gamma and epsilon chains, while a peripheral stalk is formed by the delta and b chains.

The protein resides in the cell inner membrane. The enzyme catalyses ATP + H2O + 4 H(+)(in) = ADP + phosphate + 5 H(+)(out). Produces ATP from ADP in the presence of a proton gradient across the membrane. The alpha chain is a regulatory subunit. The polypeptide is ATP synthase subunit alpha (Bordetella petrii (strain ATCC BAA-461 / DSM 12804 / CCUG 43448)).